The chain runs to 287 residues: Elongation factor Ts (287 aa).

The interval 80–83 (TDFL) is involved in Mg(2+) ion dislocation from EF-Tu.

The protein belongs to the EF-Ts family.

It localises to the cytoplasm. In terms of biological role, associates with the EF-Tu.GDP complex and induces the exchange of GDP to GTP. It remains bound to the aminoacyl-tRNA.EF-Tu.GTP complex up to the GTP hydrolysis stage on the ribosome. The protein is Elongation factor Ts of Pseudomonas putida (strain GB-1).